Here is a 141-residue protein sequence, read N- to C-terminus: Large ribosomal subunit protein uL11 (141 aa).

It belongs to the universal ribosomal protein uL11 family. As to quaternary structure, part of the ribosomal stalk of the 50S ribosomal subunit. Interacts with L10 and the large rRNA to form the base of the stalk. L10 forms an elongated spine to which L12 dimers bind in a sequential fashion forming a multimeric L10(L12)X complex. One or more lysine residues are methylated.

In terms of biological role, forms part of the ribosomal stalk which helps the ribosome interact with GTP-bound translation factors. In Prochlorococcus marinus (strain NATL1A), this protein is Large ribosomal subunit protein uL11.